A 128-amino-acid chain; its full sequence is Small ribosomal subunit protein uS12 (128 aa).

Asp89 carries the post-translational modification 3-methylthioaspartic acid.

Belongs to the universal ribosomal protein uS12 family. As to quaternary structure, part of the 30S ribosomal subunit. Contacts proteins S8 and S17. May interact with IF1 in the 30S initiation complex.

Functionally, with S4 and S5 plays an important role in translational accuracy. Interacts with and stabilizes bases of the 16S rRNA that are involved in tRNA selection in the A site and with the mRNA backbone. Located at the interface of the 30S and 50S subunits, it traverses the body of the 30S subunit contacting proteins on the other side and probably holding the rRNA structure together. The combined cluster of proteins S8, S12 and S17 appears to hold together the shoulder and platform of the 30S subunit. This is Small ribosomal subunit protein uS12 from Campylobacter jejuni subsp. doylei (strain ATCC BAA-1458 / RM4099 / 269.97).